A 490-amino-acid polypeptide reads, in one-letter code: Actin-related protein 6 (490 aa).

This sequence belongs to the actin family. ARP6 subfamily.

The protein resides in the cytoplasm. It is found in the cytoskeleton. The polypeptide is Actin-related protein 6 (Dictyostelium discoideum (Social amoeba)).